A 1171-amino-acid chain; its full sequence is Zinc finger BED domain-containing protein 4 (1171 aa).

Residues 25–62 (EEEDDDGIPPDSLERMDFKSEQEDMKQTDSGGERAGLG) form a disordered region. Positions 36–51 (SLERMDFKSEQEDMKQ) are enriched in basic and acidic residues. A Glycyl lysine isopeptide (Lys-Gly) (interchain with G-Cter in SUMO2) cross-link involves residue Lys43. 2 consecutive BED-type zinc fingers follow at residues 115 to 172 (RKKS…LIQE) and 285 to 342 (RRRS…VLQE). 8 residues coordinate Zn(2+): Cys136, Cys139, His160, His165, Cys306, Cys309, His330, and His335. Over residues 362 to 385 (LLPPEGELSSVSSSPVKPVRESPS) the composition is skewed to low complexity. The segment at 362-405 (LLPPEGELSSVSSSPVKPVRESPSASSSPDRLTEDLQSHLNPGD) is disordered. 2 BED-type zinc fingers span residues 456-512 (RLKS…VGSQ) and 558-615 (KKTS…LKTE). 2 residues coordinate Zn(2+): Cys477 and Cys480. Lys489 is covalently cross-linked (Glycyl lysine isopeptide (Lys-Gly) (interchain with G-Cter in SUMO2)). Residues His500, His505, Cys579, Cys582, His603, and His608 each contribute to the Zn(2+) site. A disordered region spans residues 614 to 640 (TEVSETARPSSPDTRVPRGTELSGASS). The residue at position 624 (Ser624) is a Phosphoserine. The interval 1086-1171 (LAYLEEEVLE…VNLPLIYFQY (86 aa)) is required for homodimerization and nuclear accumulation.

Homodimer; via C-terminus. Interacts with MYH9. Interacts with SAFB/SAFB1. Expressed in testis, heart, lung, and weakly expressed in brain, liver, muscle, placenta and small intestine. Expressed in the retina, found in the cone photoreceptors, Mueller cells, cone pedicles and in the innermost retinal layer.

It localises to the nucleus. The protein resides in the cytoplasm. It is found in the photoreceptor inner segment. Transcriptional regulator that binds to poly-guanine tracts in gene promoters and activates transcription. Able to bind single- and double-stranded DNA and RNA. The protein is Zinc finger BED domain-containing protein 4 (ZBED4) of Homo sapiens (Human).